We begin with the raw amino-acid sequence, 118 residues long: Large ribosomal subunit protein bL20 (118 aa).

It belongs to the bacterial ribosomal protein bL20 family.

In terms of biological role, binds directly to 23S ribosomal RNA and is necessary for the in vitro assembly process of the 50S ribosomal subunit. It is not involved in the protein synthesizing functions of that subunit. This Psychrobacter sp. (strain PRwf-1) protein is Large ribosomal subunit protein bL20.